Here is a 1737-residue protein sequence, read N- to C-terminus: Myosin-M heavy chain (1737 aa).

One can recognise a Myosin N-terminal SH3-like domain in the interval 4–55 (LEGDIVWVPHTVNGYCRGKIIGYNEKNQVTVRLLELNEEIKINEQLIQNYNQ). In terms of domain architecture, Myosin motor spans 59–886 (KDFSDMVEIQ…LYIYLEKKRY (828 aa)). Position 154-161 (154-161 (GESGSGKT)) interacts with ATP. The disordered stretch occupies residues 640 to 727 (KSNDNNSNNN…NNNSSNNKKS (88 aa)). Composition is skewed to low complexity over residues 641–663 (SNDNNSNNNNSNNNSSSSSSSQS) and 679–724 (NSGS…SSNN). Residues 754–761 (YIRCIKPN) form an actin-binding region. IQ domains lie at 889–918 (LVDSVLKIQAFFKMIKIRNQYKRNKESSLF) and 912–941 (NKESSLFLQTLIRAQRAKKDFEQLVILENK). Residues 926–1039 (QRAKKDFEQL…KKKNEQNLSL (114 aa)) are a coiled coil. Residues 947-1028 (RKKELERQRK…IEKKRKEEEK (82 aa)) are compositionally biased toward basic and acidic residues. 4 disordered regions span residues 947-1099 (RKKE…PSTK), 1117-1199 (LHGS…PNFN), 1266-1290 (GINKPIPQRTISSSENSPLSRANSS), and 1304-1364 (SLST…SNED). Low complexity predominate over residues 1044 to 1070 (ITNSPSLINTTTTTTTTTTTTTNTSSP). The segment covering 1071–1081 (PLSPPISPRPS) has biased composition (pro residues). The segment covering 1082 to 1098 (TPSSTSSSSSTTSSPST) has biased composition (low complexity). Positions 1121–1131 (SHSDKNSKEDN) are enriched in basic and acidic residues. Residues 1132–1141 (NSNNNNNGDS) are compositionally biased toward low complexity. The span at 1143 to 1153 (IILSSDSSFGQ) shows a compositional bias: polar residues. Residues 1162–1171 (PTPPPPPPLK) show a composition bias toward pro residues. Composition is skewed to polar residues over residues 1180-1198 (GVENNSSPNLWSHRNSPNF) and 1274-1288 (RTISSSENSPLSRAN). Positions 1304–1359 (SLSTSTTPSTPTTPKTPTTLSSSSVSTSTSLSSVSSSVSSSSSSSIPTPIIESTPS) are enriched in low complexity. In terms of domain architecture, DH spans 1389–1572 (FRIKIINELI…SDIVQSINEA (184 aa)). The region spanning 1603–1714 (TLLMEGTVSA…WFKQIKALIQ (112 aa)) is the PH domain.

The protein belongs to the TRAFAC class myosin-kinesin ATPase superfamily. Myosin family. As to quaternary structure, monomer.

The protein resides in the cytoplasm. Its function is as follows. Myosins are actin-based motor molecules with ATPase activity. Involved in macropinocytosis and remodeling of actin cytoskeleton. In Dictyostelium discoideum (Social amoeba), this protein is Myosin-M heavy chain (myoM).